A 424-amino-acid chain; its full sequence is D-inositol 3-phosphate glycosyltransferase (424 aa).

1D-myo-inositol 3-phosphate is bound at residue histidine 20. Residues 26–27 (QP) and glycine 34 contribute to the UDP-N-acetyl-alpha-D-glucosamine site. 1D-myo-inositol 3-phosphate is bound by residues 31–36 (DAGGMN), lysine 89, tyrosine 122, threonine 146, and arginine 166. UDP-N-acetyl-alpha-D-glucosamine-binding residues include arginine 240, lysine 245, and methionine 306. Mg(2+)-binding residues include tyrosine 315, arginine 316, and alanine 318. The UDP-N-acetyl-alpha-D-glucosamine site is built by glutamate 328 and glutamate 336. A Mg(2+)-binding site is contributed by threonine 342.

It belongs to the glycosyltransferase group 1 family. MshA subfamily. As to quaternary structure, homodimer.

It carries out the reaction 1D-myo-inositol 3-phosphate + UDP-N-acetyl-alpha-D-glucosamine = 1D-myo-inositol 2-acetamido-2-deoxy-alpha-D-glucopyranoside 3-phosphate + UDP + H(+). Functionally, catalyzes the transfer of a N-acetyl-glucosamine moiety to 1D-myo-inositol 3-phosphate to produce 1D-myo-inositol 2-acetamido-2-deoxy-glucopyranoside 3-phosphate in the mycothiol biosynthesis pathway. In Kribbella flavida (strain DSM 17836 / JCM 10339 / NBRC 14399), this protein is D-inositol 3-phosphate glycosyltransferase.